A 192-amino-acid chain; its full sequence is NF-kappa-B inhibitor-interacting Ras-like protein 1 (192 aa).

Residue 11-18 (GLLSVGKT) coordinates GTP. The Effector region signature appears at 35–43 (DCETMEDVY). Positions 58–93 (HLYDTRGLQEGVELPKHYFSFADGFVLVYSVNNLES) are interactions with NFKBIA and NFKBIB. GTP contacts are provided by residues 61–65 (DTRGL) and 120–123 (NKID). Residues 168 to 192 (LSQPQSKSSFPLPGRKNKGNSSSEN) are disordered.

Belongs to the small GTPase superfamily. Ras family. KappaB-Ras subfamily. In terms of assembly, interacts with both NF-kappa-B inhibitor alpha (NFKBIA) and beta (NFKBIB) in vitro. However, it probably only interacts with NFKBIB in vivo. Forms a complex with NFKBIB and NF-kappa-B heterodimer (p50/NFKB1 and p65/RELA). Also interacts with c-Rel (REL).

The protein resides in the cytoplasm. Atypical Ras-like protein that acts as a potent regulator of NF-kappa-B activity by preventing the degradation of NF-kappa-B inhibitor beta (NFKBIB) by most signals, explaining why NFKBIB is more resistant to degradation. May act by blocking phosphorylation of NFKBIB and mediating cytoplasmic retention of p65/RELA NF-kappa-B subunit. It is unclear whether it acts as a GTPase. Both GTP- and GDP-bound forms block phosphorylation of NFKBIB. This Macaca fascicularis (Crab-eating macaque) protein is NF-kappa-B inhibitor-interacting Ras-like protein 1 (NKIRAS1).